Here is a 370-residue protein sequence, read N- to C-terminus: tRNA-specific 2-thiouridylase MnmA (370 aa).

Residues 24-31 and Leu50 contribute to the ATP site; that span reads AMSGGVDS. Cys118 acts as the Nucleophile in catalysis. Cys118 and Cys214 are disulfide-bonded. Residue Gly142 participates in ATP binding. The segment at 164–166 is interaction with tRNA; it reads KDQ. Cys214 (cysteine persulfide intermediate) is an active-site residue.

It belongs to the MnmA/TRMU family.

Its subcellular location is the cytoplasm. The catalysed reaction is S-sulfanyl-L-cysteinyl-[protein] + uridine(34) in tRNA + AH2 + ATP = 2-thiouridine(34) in tRNA + L-cysteinyl-[protein] + A + AMP + diphosphate + H(+). Its function is as follows. Catalyzes the 2-thiolation of uridine at the wobble position (U34) of tRNA, leading to the formation of s(2)U34. The chain is tRNA-specific 2-thiouridylase MnmA from Ehrlichia ruminantium (strain Gardel).